The sequence spans 3317 residues: Cadherin-23 (3317 aa).

A signal peptide spans 1–23 (MRHPPVTWCAMLWLLMLVSGSWG). The Extracellular segment spans residues 24 to 3062 (QVNRLPFFTN…SVQLPDDMSA (3039 aa)). Cadherin domains follow at residues 34–132 (HFFD…APTF), 133–236 (HNQP…DPIF), 237–348 (INLP…APEF), 349–458 (NSSE…RPIF), 459–559 (SQPL…VPTF), 560–669 (QKDA…PPTF), 670–782 (SKPA…APYY), 777–888 (KDAP…DPTF), 889–993 (QNLP…TPTF), 994–1100 (FPAV…RPIF), 1101–1206 (LQSS…APVF), 1208–1311 (QQQY…AVQF), 1312–1416 (SNAS…SPRF), 1418–1525 (FTSD…PPVI), 1527–1632 (SPFG…APVF), 1633–1742 (QQPH…VPTF), 1743–1849 (PRDY…DPVL), 1850–1957 (LNLP…HPLF), 1958–2067 (TEGT…WPTF), 2068–2172 (SPPA…RPEF), 2173–2291 (LNPI…TPQF), 2295–2400 (GITY…NPIF), 2401–2507 (DQLS…RPQF), 2508–2609 (SKPQ…RPVF), 2612–2720 (PPNG…EPLF), 2727–2844 (SPQY…PPRF), and 2845–2973 (TKAE…EEEF). Residues Asn-155 and Asn-206 are each glycosylated (N-linked (GlcNAc...) asparagine). Residues Asn-349, Asn-391, Asn-432, Asn-464, Asn-470, Asn-600, Asn-692, Asn-763, Asn-808, Asn-825, Asn-939, Asn-999, Asn-1016, Asn-1169, Asn-1280, Asn-1313, Asn-1471, Asn-1532, Asn-1649, Asn-1665, Asn-1816, Asn-1855, Asn-1887, Asn-1900, Asn-2012, Asn-2048, Asn-2127, Asn-2166, Asn-2193, Asn-2261, Asn-2355, and Asn-2367 are each glycosylated (N-linked (GlcNAc...) asparagine). Residues Asn-2576, Asn-2614, Asn-2747, Asn-2806, Asn-2875, Asn-2894, Asn-2939, and Asn-2979 are each glycosylated (N-linked (GlcNAc...) asparagine). A helical membrane pass occupies residues 3063–3083 (LQMAIIVLAILLFLAAMLFVL). At 3084 to 3317 (MNWYYRTIHK…MESPLEITEL (234 aa)) the chain is on the cytoplasmic side.

As to quaternary structure, antiparallel heterodimer with PCDH15. Interacts with USH1C and USH1G.

It localises to the cell membrane. Cadherins are calcium-dependent cell adhesion proteins. They preferentially interact with themselves in a homophilic manner in connecting cells. CDH23 is required for establishing and/or maintaining the proper organization of the stereocilia bundle of hair cells in the cochlea and the vestibule during late embryonic/early postnatal development. It is part of the functional network formed by USH1C, USH1G, CDH23 and MYO7A that mediates mechanotransduction in cochlear hair cells. Required for normal hearing. The protein is Cadherin-23 (Cdh23) of Rattus norvegicus (Rat).